Consider the following 1172-residue polypeptide: WD repeat-containing protein 48 homolog (1172 aa).

Residues 1–115 (MYEYYSTGKI…HSYGGGGGGT (115 aa)) form a disordered region. The segment covering 13–36 (LPQQVDSNGINSKPMNSSPSTPIP) has biased composition (polar residues). Over residues 37–63 (NNNNNNNNNNNNNNNNNNNNNNNNNNN) the composition is skewed to low complexity. Residues 64 to 89 (RNKSQQSFYLNNNNRNCGFSSPTKPQ) show a composition bias toward polar residues. Over residues 90–107 (YNNNNNNNNNNNSNYNHS) the composition is skewed to low complexity. WD repeat units lie at residues 152 to 202 (RHCF…GFKF), 208 to 246 (DHTD…CVNS), 249 to 548 (FHDD…SPMF), 560 to 599 (GEGI…KIFK), 602 to 641 (GHTD…CIQV), 645 to 683 (LHTD…QSRL), and 686 to 727 (RENE…NQSI). Low complexity predominate over residues 341–365 (ISTNNNNNNSSSSNNNNNNNNNNNN). The tract at residues 341-544 (ISTNNNNNNS…NDNNNLNKKF (204 aa)) is disordered. Composition is skewed to polar residues over residues 366-377 (GQTNTHENTAET), 388-408 (QLSS…NFRN), and 417-434 (PPSS…SNGR). The span at 435–485 (NVNNRENNNNNNNNNNNNNNNNNNNNNNNNNNNNNNNNNINNNNHENNGNV) shows a compositional bias: low complexity. A compositionally biased stretch (acidic residues) spans 486–503 (DVDDEDDDDDDDDDDDDD). Basic and acidic residues predominate over residues 504-513 (CNKNKKKYDD). A compositionally biased stretch (low complexity) spans 514–543 (NNNNNNYNNNNNKKNNSNDNNNDNNNLNKK). Positions 745 to 769 (NNNNNNNNNNNNNNNNNNNNNNNNN) are enriched in low complexity. Residues 745–775 (NNNNNNNNNNNNNNNNNNNNNNNNNNREKLS) form a disordered region. One copy of the WD 8 repeat lies at 794 to 833 (QGRAGIIKNQVLNNRRQVLTKDNDNNVQLWDITKGKEIES). The segment at 926–986 (ELNHSNDSVN…TNSTTPNSGR (61 aa)) is disordered. Low complexity predominate over residues 930 to 984 (SNDSVNSSLSSNTSGDNNNNNYNNYNNYNNNNNNGLQKSSSSSSIVSTNSTTPNS).

Belongs to the WD repeat WDR48 family.

The sequence is that of WD repeat-containing protein 48 homolog from Dictyostelium discoideum (Social amoeba).